A 100-amino-acid polypeptide reads, in one-letter code: Co-chaperonin GroES (100 aa).

The protein belongs to the GroES chaperonin family. Heptamer of 7 subunits arranged in a ring. Interacts with the chaperonin GroEL.

It is found in the cytoplasm. In terms of biological role, together with the chaperonin GroEL, plays an essential role in assisting protein folding. The GroEL-GroES system forms a nano-cage that allows encapsulation of the non-native substrate proteins and provides a physical environment optimized to promote and accelerate protein folding. GroES binds to the apical surface of the GroEL ring, thereby capping the opening of the GroEL channel. The protein is Co-chaperonin GroES of Mycolicibacterium vanbaalenii (strain DSM 7251 / JCM 13017 / BCRC 16820 / KCTC 9966 / NRRL B-24157 / PYR-1) (Mycobacterium vanbaalenii).